We begin with the raw amino-acid sequence, 497 residues long: Nucleoside transporter 1 (497 aa).

Residues 1 to 26 (MSLKGGTAAPAPMAPPRKWYDMTSAE) lie on the Cytoplasmic side of the membrane. The chain crosses the membrane as a helical span at residues 27–47 (FYVYVVAFMCGISIMMPINAV). At 48 to 77 (FSAPSYMLEYYLYATKDPFLVPKMTNFWTN) the chain is on the extracellular side. The helical transmembrane segment at 78–98 (VMTYYNLISMVTSLVVEPLTL) threads the bilayer. Residues 99–107 (LKSFRKIPM) lie on the Cytoplasmic side of the membrane. The chain crosses the membrane as a helical span at residues 108 to 128 (LVRLLGGLSVLIIEIIVLMVV). At 129–135 (PARGTTE) the chain is on the extracellular side. A helical membrane pass occupies residues 136–156 (AGAVATMCIAGFIGGLGTSIF). Topologically, residues 157-172 (ESTVYGMFGAFPPSFT) are cytoplasmic. A helical transmembrane segment spans residues 173 to 193 (SIMMGGVGISGVLTSLIQIIV). Topologically, residues 194 to 208 (KAALPDTYEGVKKQS) are extracellular. Residues 209 to 229 (YIYYSLDVGIQAATFIALIMM) form a helical membrane-spanning segment. The Cytoplasmic portion of the chain corresponds to 230–337 (RFNSFAQLHF…SVFSVLRSVK (108 aa)). A compositionally biased stretch (basic and acidic residues) spans 286 to 299 (NAEAHKDDPLAERE). Residues 286–316 (NAEAHKDDPLAERELSEEESGDSRAVEAAGE) are disordered. The helical transmembrane segment at 338–358 (WMFVACGFNFLITLFLFPGIA) threads the bilayer. At 359-361 (TGM) the chain is on the extracellular side. The chain crosses the membrane as a helical span at residues 362-382 (FPESKWFATVAVFIFNCCDVL). Topologically, residues 383–400 (GRFSSAFRITWPRRYNQR) are cytoplasmic. A helical transmembrane segment spans residues 401–421 (WIIVAASFARVIFVPLLLLHS). Residues 422–432 (YHYIPSEAYGY) are Extracellular-facing. A helical transmembrane segment spans residues 433 to 453 (VMQVVFGLSSGYIASMALVLG). Over 454–465 (PQSKGIDNDGKR) the chain is Cytoplasmic. The helical transmembrane segment at 466–486 (FVAGTLMGISILVGGTIGTVL) threads the bilayer. The Extracellular segment spans residues 487 to 497 (SIMTQTIRETY).

This sequence belongs to the SLC29A/ENT transporter (TC 2.A.57) family.

It localises to the cell membrane. The catalysed reaction is adenosine(in) = adenosine(out). It catalyses the reaction hypoxanthine(out) = hypoxanthine(in). The enzyme catalyses inosine(in) = inosine(out). It carries out the reaction uridine(out) = uridine(in). The catalysed reaction is cytidine(in) = cytidine(out). Functionally, nucleoside transporter with broad substrate specificity. Transports adenosine with high affinity. Can also transport hypoxanthine, inosine, uridine and cytidine. The polypeptide is Nucleoside transporter 1 (Crithidia fasciculata).